A 124-amino-acid polypeptide reads, in one-letter code: UPF0231 protein Sbal223_3655 (124 aa).

It belongs to the UPF0231 family.

The sequence is that of UPF0231 protein Sbal223_3655 from Shewanella baltica (strain OS223).